Reading from the N-terminus, the 232-residue chain is Ion-translocating oxidoreductase complex subunit E (232 aa).

Helical transmembrane passes span 18-38, 39-59, 69-89, 93-113, 128-148, and 182-202; these read ALVQLLGLCPLLAVTATVTNG, LGLGLATTLVLIGSNATVSII, IPIFVMIIAAFVTVVQLLMNA, ELYQALGIFIPLIVTNCAIIG, AFDGLMMGLGFTVVLVLLGAM, and PFLLAILPPGAFLGMGLLIAA.

This sequence belongs to the NqrDE/RnfAE family. As to quaternary structure, the complex is composed of six subunits: RnfA, RnfB, RnfC, RnfD, RnfE and RnfG.

Its subcellular location is the cell inner membrane. Functionally, part of a membrane-bound complex that couples electron transfer with translocation of ions across the membrane. In Pseudoalteromonas atlantica (strain T6c / ATCC BAA-1087), this protein is Ion-translocating oxidoreductase complex subunit E.